A 248-amino-acid chain; its full sequence is Pyridoxine 5'-phosphate synthase (248 aa).

N9 contributes to the 3-amino-2-oxopropyl phosphate binding site. Residue 11–12 coordinates 1-deoxy-D-xylulose 5-phosphate; the sequence is DH. Residue R20 participates in 3-amino-2-oxopropyl phosphate binding. H45 functions as the Proton acceptor in the catalytic mechanism. R47 and H52 together coordinate 1-deoxy-D-xylulose 5-phosphate. The Proton acceptor role is filled by E72. T102 is a binding site for 1-deoxy-D-xylulose 5-phosphate. The active-site Proton donor is the H193. 3-amino-2-oxopropyl phosphate is bound by residues G194 and 215–216; that span reads GH.

The protein belongs to the PNP synthase family. Homooctamer; tetramer of dimers.

It localises to the cytoplasm. The enzyme catalyses 3-amino-2-oxopropyl phosphate + 1-deoxy-D-xylulose 5-phosphate = pyridoxine 5'-phosphate + phosphate + 2 H2O + H(+). The protein operates within cofactor biosynthesis; pyridoxine 5'-phosphate biosynthesis; pyridoxine 5'-phosphate from D-erythrose 4-phosphate: step 5/5. Catalyzes the complicated ring closure reaction between the two acyclic compounds 1-deoxy-D-xylulose-5-phosphate (DXP) and 3-amino-2-oxopropyl phosphate (1-amino-acetone-3-phosphate or AAP) to form pyridoxine 5'-phosphate (PNP) and inorganic phosphate. The chain is Pyridoxine 5'-phosphate synthase from Hydrogenovibrio crunogenus (strain DSM 25203 / XCL-2) (Thiomicrospira crunogena).